A 166-amino-acid polypeptide reads, in one-letter code: NAD(P)H-quinone oxidoreductase subunit I, chloroplastic (166 aa).

4Fe-4S ferredoxin-type domains follow at residues Gly-55–Lys-84 and Leu-95–Glu-124. The [4Fe-4S] cluster site is built by Cys-64, Cys-67, Cys-70, Cys-74, Cys-104, Cys-107, Cys-110, and Cys-114.

This sequence belongs to the complex I 23 kDa subunit family. NDH is composed of at least 16 different subunits, 5 of which are encoded in the nucleus. [4Fe-4S] cluster serves as cofactor.

Its subcellular location is the plastid. The protein resides in the chloroplast thylakoid membrane. It catalyses the reaction a plastoquinone + NADH + (n+1) H(+)(in) = a plastoquinol + NAD(+) + n H(+)(out). The catalysed reaction is a plastoquinone + NADPH + (n+1) H(+)(in) = a plastoquinol + NADP(+) + n H(+)(out). Its function is as follows. NDH shuttles electrons from NAD(P)H:plastoquinone, via FMN and iron-sulfur (Fe-S) centers, to quinones in the photosynthetic chain and possibly in a chloroplast respiratory chain. The immediate electron acceptor for the enzyme in this species is believed to be plastoquinone. Couples the redox reaction to proton translocation, and thus conserves the redox energy in a proton gradient. The protein is NAD(P)H-quinone oxidoreductase subunit I, chloroplastic of Aphanactis jamesoniana.